The following is a 69-amino-acid chain: MGKLGENVPLLIDKAVDFMASSQAFREYLKKLPPRNAIPSGIPDESVPLYLQRLEYYRRLYRPKQVEGQ.

This is an uncharacterized protein from Escherichia coli O157:H7.